We begin with the raw amino-acid sequence, 253 residues long: uncharacterized protein (253 aa).

Residues 211–241 are disordered; sequence TTRRKRYREDRDSGEDLGAESKRGNGSVRYT.

This is an uncharacterized protein from Ictalurid herpesvirus 1 (strain Auburn) (IcHV-1).